A 2198-amino-acid polypeptide reads, in one-letter code: Activating signal cointegrator 1 complex subunit 3 (2198 aa).

Ser12 carries the phosphoserine modification. Coiled-coil stretches lie at residues 18-81 (KQDN…KQIV) and 328-356 (IQSE…KAGE). Residues 487–670 (ETAYNTNENM…FLHVNPYIGL (184 aa)) enclose the Helicase ATP-binding 1 domain. 500-507 (APTGAGKT) provides a ligand contact to ATP. Residue Lys573 is modified to N6-acetyllysine. Positions 612-615 (DEVH) match the DEVH box motif. Residues 697–915 (QLNNMDEVCY…GTVTNVEEAV (219 aa)) enclose the Helicase C-terminal 1 domain. The region spanning 979 to 1288 (STDLGRTASH…GAEAVCIINF (310 aa)) is the SEC63 1 domain. The Helicase ATP-binding 2 domain occupies 1337 to 1512 (HTLYHTDCNV…WLNIKQMGLF (176 aa)). 1350-1357 (APTGSGKT) serves as a coordination point for ATP. The short motif at 1454–1457 (DEIH) is the DEIH box element. The Helicase C-terminal 2 domain maps to 1545–1740 (PAFQAIRSHS…VLSDHLNAEI (196 aa)). The 365-residue stretch at 1813-2177 (PLTCGRIASY…LGLDQQYDIY (365 aa)) folds into the SEC63 2 domain.

This sequence belongs to the helicase family. In terms of assembly, identified in the ASCC complex that contains ASCC1, ASCC2 and ASCC3. Functions as a scaffolding subunit that interacts directly with both ASCC1 and ASCC2. Interacts directly with ALKBH3, and thereby recruits ALKBH3 to the ASCC complex. Part of the ASC-1/TRIP4 complex, that contains TRIP4, ASCC1, ASCC2 and ASCC3. Part of the RQT (ribosome quality control trigger) complex, that contains ASCC2, ASCC3 and TRIP4. Associates with ribosomes; recruited to collided ribosomes. Interacts with ZCCHC4. Interacts with ZNF598. Interacts with RPS3.

The protein resides in the nucleus. Its subcellular location is the nucleus speckle. The protein localises to the cytoplasm. It localises to the cytosol. It catalyses the reaction Couples ATP hydrolysis with the unwinding of duplex DNA by translocating in the 3'-5' direction.. The enzyme catalyses ATP + H2O = ADP + phosphate + H(+). ATPase involved both in DNA repair and rescue of stalled ribosomes. 3'-5' DNA helicase involved in repair of alkylated DNA: promotes DNA unwinding to generate single-stranded substrate needed for ALKBH3, enabling ALKBH3 to process alkylated N3-methylcytosine (3mC) within double-stranded regions. Also involved in activation of the ribosome quality control (RQC) pathway, a pathway that degrades nascent peptide chains during problematic translation. Drives the splitting of stalled ribosomes that are ubiquitinated in a ZNF598-dependent manner, as part of the ribosome quality control trigger (RQT) complex. Part of the ASC-1 complex that enhances NF-kappa-B, SRF and AP1 transactivation. This Mus musculus (Mouse) protein is Activating signal cointegrator 1 complex subunit 3 (Ascc3).